A 536-amino-acid chain; its full sequence is Probable serine/threonine-protein kinase DDB_G0268550 (536 aa).

Residues 14-305 form the Protein kinase domain; that stretch reads EIIEKNYRKG…IDVLEIHPFL (292 aa). ATP is bound by residues 20–28 and Lys-51; that span reads YRKGGFSKI. Asp-147 serves as the catalytic Proton acceptor. The interval 161–192 is disordered; that stretch reads DNNNNNNNNNNNNNNNNNNNSNINDDNNNSNS.

The protein belongs to the protein kinase superfamily. Ser/Thr protein kinase family. It depends on Mg(2+) as a cofactor.

The enzyme catalyses L-seryl-[protein] + ATP = O-phospho-L-seryl-[protein] + ADP + H(+). It carries out the reaction L-threonyl-[protein] + ATP = O-phospho-L-threonyl-[protein] + ADP + H(+). The protein is Probable serine/threonine-protein kinase DDB_G0268550 of Dictyostelium discoideum (Social amoeba).